We begin with the raw amino-acid sequence, 912 residues long: Protein translocase subunit SecA (912 aa).

Residues Gln-87, 105–109, and Asp-512 contribute to the ATP site; that span reads GEGKT. Zn(2+)-binding residues include Cys-896, Cys-898, Cys-907, and His-908.

Belongs to the SecA family. In terms of assembly, monomer and homodimer. Part of the essential Sec protein translocation apparatus which comprises SecA, SecYEG and auxiliary proteins SecDF-YajC and YidC. Requires Zn(2+) as cofactor.

The protein resides in the cell inner membrane. The protein localises to the cytoplasm. It catalyses the reaction ATP + H2O + cellular proteinSide 1 = ADP + phosphate + cellular proteinSide 2.. Its function is as follows. Part of the Sec protein translocase complex. Interacts with the SecYEG preprotein conducting channel. Has a central role in coupling the hydrolysis of ATP to the transfer of proteins into and across the cell membrane, serving both as a receptor for the preprotein-SecB complex and as an ATP-driven molecular motor driving the stepwise translocation of polypeptide chains across the membrane. This chain is Protein translocase subunit SecA, found in Pseudomonas fluorescens (strain Pf0-1).